Reading from the N-terminus, the 6199-residue chain is MPAVLALSGLLLMLLTVSVRSESAELRFQGQTQFVVNESSRAIVRLVVERVGDPINVTALVLLQGDDTGDFEATTAAAFLLSSESSKTIFIAVKDDDIPEADETFVFILRLQSSSNGVTVGTPNTATITILSNDNAFGIISFNSSSLITVEESKGRSQYVPLTLLREKGTYGTVTVNFEIFGGPNPASEDLSPDMGNITFPPGRSVVVFSIMIQDDKLPEDDEIFTVQLTEAAGGALLNPNRSSVQIKISRNDAPIRFSKSTLVVPENIGVISLTVTRGRTEDGLLIGSDDKTVSVAYAIITGNGAASATPLTDFVDLQTERMVVFLPGVHEADLRFSIRDDNIPEIAESFQVVLLEETLLGDAVLVTPSLTLVTIEPNDKPYGVLSISPSPIQPHIINEDLNLIYEGMIIVRNGGTHGAVSVQWNITRNSTDRSPVSADLNPAAGTLRFSEGQMSAVLPLNITQDSLPEEAEAFLLKLIPGSVQGGAEVDEPMEMVFFIQDSDDVYGRFGFHPRENQSIQSQPEGRFLSLSFLREGGTLGEVRLTLTALYIPARPLDPSRARDGVLNGTSVNTVLFSSGQSRAQLILPIRNDAFLQNGAHFRIQLDSVELVNITPPIPSMSPRFAGALNISLIITPDIANGEIGFTSNQTVVALEPEDSNSSLITLQLRRDGTDGQAVVFWSLRPTGENKEDVTKGDISPFTGSVTFLSGQSEAVINLTVLADNIPEINETIILTLDRTNVDNQILKPGFTSREIVILENDDPGGVFEFSPVSKGPWFINEGETVELRVIRAQGQLLNQLIRYTVIPSGTAQFYGATGILEFQPGEREVMVALVAKPDGIPELDETFSVVLSSYSTPASRLGNRREVNITVRKSDDPFGVIEFIQPDLDFTINESKALGCLLSILPPLEKSRGRFGNVSIFWILEPTYSGDVKPVQGEIVFAEGEYQKNLTLSSVADEIPEKTENFTITLLNATGGARLGNILSARLSIRANDDPIYFAEPVGQRVREGGVANFTILRAGLANFVTTVNYRFEYGDTSSEDFIPESNDTMLVFHFGEWMKNISVAVVDDNIPETDEPFYIVLFNATGDAVVYGQITATVVIEANDDANGIFSLDSAQKPGEEGKTNNFYVLRDRGHFGNVTIYWQLFANDTPLEPYQEFVNTSGFITFRTGEKTKPIVLEVISDKLPEFNEFYELRLMNVSGGYPGEGGKLANRDLNASVLIPFNDDPFGVFAIAPDSLEREVAEDVLSVNDMTSVTSLTILRQQGTFGDVRVAWEILSGAFPRGLPPMEDLILMASFPSAVELQPHSRRRHAGTDALFFSGRPGAYGSISAETTLLVPQILANFTLSVWLKPKPNTDGFVVSKGNGNGTVYYGVQVQTNDSHVTIMLHYTTIGSNSTHVARATANTFVEDAWVHVIIAVEDGIIEFYLDGSPIPGGIKSLKGEAIVNDATPIRIGSNPDGEQRFTGLLQDVRLYSSCLNRSQIHELHNQPAKTDLHNVSGYLTYRQEEKEKSFLVEVRDDQEAEGEEVFYLQLVAVQGGARLPMPRPTAILKVMKSDNANGLFSFTGACIPDIAEEGSMISCVVERTRGALDYVYVNYTVTQLDSPADLSNASDFANATGFILFQPGQLSEVLNLLVVNDDLPEVDEHFRVRLVSAKSGDGKPGSTPTSGASIDPEKAVNNVTVKASDHPYGLLQFQTTPVPVGMIRPALEEARVTVQEEAGVVRLLVARAQGLLGRVMVGYRTSPFTAAGSEDYEGFLDFLPGERFKYINVTIIDNSVPELDKVFRVELYNPNGGVDPYFASEGSGSGESETDFFLPSFHYHHANLGAAARIIVTIAASDEAHGVFQFGADSLIVNGTEPEEGRSTVVLQVIRTFGALSNVTVYWEADAASEGELVYRSGNVNFEVGQTVRSIYLLISQDDVPELDKTFKVRLTNASHGRLGKETTATLTVLASDDPYGLFVFSDNTRPVRVAEANALVALTIQRRKGLMGRVRVAYRTLRDTDTVLYSTPGVGRASEGNDFIAVVDSVIFSANQSEVNVTLRVLDDNEPERAESVFLELVSVTLIEGLQPRPVALSPRLGPRNVTIAQVIIEASDDAFGVLQLSSSAVSVPEYYTGPIINVTRIGGIFADVSVKFRAVPLTARVGEDYRVASSDVVLLEGESSKPVPILIINDVVPELEETFRIELLNQTTGGALLGDLTQAIITILPSDDPFGLFVFQAAPITIEEPALTAFEVSVPIVRNAGTMGDVAVQWRATVNGRPATGDLRPVSGEVMFSPGETLKTLKVEVLPDDVPEIEEIIKVELVSATSGGNIGLEKVVDTIVPANDNPHGTVYFEQAVYRVQEPLEGIYIANVTIRRSGGNFGMLEVVYSTLEVDIVSNALKEGRNFLVYYDSRLAGVPSNAIRRPINITTSTNVLNFCAAFCLRERACQAFSFTNTTTPSCFWVTSGVSQLSPSPQTFTYLKNTTATASLFSSQAVAGSDFITMTAQTTTMLDGSGVANLTVPILTDSLPEMDESFIIKILKVSLVNVTATARNLPTIRQPDTALVTIGMNGDAFGIFLLYSINPNATQEGLYLEVREEPKTTVLLVIERRGGSMGQVTVEWKYVGGSATPNADFNGTGETLIFAEGDVKKTLEFIITDDTEPENNETLQIGLVSTEGGSRILPSSDTVTILILANDNAAGVVGFHTASRSRIVREGESVTLLVERTAPAIGNVAVDWRIEGPLVPTTFADTSGTLFFSEGILNNTIVLKLLEDTTPEDREEYRVILSNIQTTGVTKTGIAALSAQGREAVVSVEASDEPFGLLSIAPSSLQVTTDEKNTTIRIYINREFGASGAVNISYETVRGSLQDLRQTEGALAQPGQDFRYVSNSVIMQDGQTSVSIPITIIDDDIPELQEFFLVNITSAVLITTLPTAPKLNTEGLVAEIIINANDGIRGIIGWQNIDYVVNETIGVLTLVAYRDAGTYGNVSLFFYAQNLEAQLGLDFNATPSMIYFVDGERHKFIEVQILDDAVPEGGETFQLILANPSAGLQLGENTTATVMILANDDGHGIISFNNSEHFLLREPTSVSGLGTSVATLYIIRDPPQGTFGTVTVQFTITDVNGSLYTDDLTPSSGFVVLEDGVRYKTLEIWAVLDAEPEMNETFTVTLSNPTGGARLGVSLQTFITVLENQAPLGLFRISPSINRTLDTMTVEEHMGTVFLTVSRSNGLESAVSVEWETRSGTAFGMRGEQPVLAVYQSIRDSFASVWCSVPSGDAALVLRLIKGLTQNQTVLYKWQGVFVPVEFVSIQNPKSCVGFTVNGSSYVAVSHADNTVSLTTNISLFRVQADLNLTLEQTFSVSGFSVKHFSTDLKQYLIASSEIFVWNRGSFFLHQSLELQDIIAAVPFRRGSSNVQHLAVCRNRTSAACFIYQWTDGRFQNPQPLALNTEVKQVESHQMGGDTFLFIVTEGLNPACEVFLWGSQQTVFQQTQSILVPGLFSVHPFTTPSGIFHLLLAGVNGSALYSWRSELRQFAEMLKSASAQEFLYLPVPSINSPKSLILASGKSSSLVYELTSVSNQSDFIPSSGELFFQPGVQELEIAVNVIDDDVPEEEEHFRVSLKNPKGGAEIGFRGQVTFFIPANDDTYGIIGFSQNSLMREVEELQSDNPVSLSIERRRGRFGRLTVHWSAYGSLDDIFPTSGVVTFSESQAVATISLNVLADDIPELAEKVTIVLTKVTTIGIIDPSRGASIDYQRAQANLTIRANGSPYGVIGWHLDSQYFITPEPQKSPSNITLSIVRDQGSSGNVLVYYSTKPALHLLPLNQASGGTDYVAKEATVVMMENATVVLVFLTILPDDIPELAETFFVNITRVEVLGGDTGAAQPSVKRPGLEIAEVTIQENDDPRGVLSFNVSKDVSGAVLAFEVPSPGNVLRLAVMRMAGIFGRLVLYWETQSVTASTEDFTPSSGNITFQDGQAMAYIEITIIDDTIVESTETFMVKLIRVIGGARLGVETSVVVSIPANDSPFGRFGFEELKVSVSEPQFLNDPASVATLTVVRSSGGEGVVHLIWLLQEESRDDLSPRNGTLIFNGTESKKTLVIQALADAVLEGEESFTIQLLSPKNEPVIDPVRGVATVVIRPDVGALGTVGIADSSRNVLIGEPICSYNGTALISLIRGPGIFGEIEIFWNITTAAVSEFEETSGKVVMKDRQSAATIQLKALDDEIPEERRVYQLRLSSLTPGSVINPDRQFASITMAASDLPHGLFSFSQASLRATEEDRAVNVTIVRSMGLFGSVWVSFHTEGRTAISGQDFGQSSGRPLFRPGESSRVIPLVIFDDDLPEGPEEFFLNITLVELLNASSMDFTVREYGLQIDQPPAIGNLSSLMVIIQKNDNAEGILEFDPKYVNNTVEEDVGTLSIPVLRRVGSYGQVTVQFVSKGLTAQPDSDYILLNGSITFQHGQTLSYINVSIVDDTESEFNEIFELQLTGATGGAILGAQLIARITIAKSDSPNGVVRFINQSAITIPNPNSTVRLSLFAERADGLLGDATVMWHIQGPNSNEVLPSMNTDIEPVNGTFSFRDGEGGVRSIDLKILPHGEVEVTEKFIIMLSVISGEMGVDPRAGSVTLTIEKFGDPNGIVQFTEQDLKERIYSEPSDSEGPLKVSVLVTRREGVMGNITVFWEILSDADTSGDFAALRGSVIILAGQRLAEIILTLLPDSVPELEETYTLRLTSVEGGAELDLNRSSTRLKVRANDEPHGVFVMYSQNQSVVVNAADRSRQLIISVNRLAGAFGNASVGYRISFTTPGQSFTEDTITGNILVKDGEREASIRVPVSSQVFFVTGFNFSVELTDVTLIGPLLGSPPRIQLESKLAVVSVPEVAANPVVGFASLALRVLDIESGQCEALVTRTGLYGNITVRWSSGFPPGQTPPGYQPGEILPRSGSIMLAHGQRSELISFTALNNISVVTAHAIYLTSVESESPGGARLRTGYTVAEVEPLGLYQFHPNSQHLVIEEDVQTITLYVQRFYGFRSNRSSVSYRTWPGTAQPDKDYVPVTDGQLLFDSRQTSASIRLSILDDTLTEPDEDFYVNLTSVRVLSTTLPLITAQPGIVQKNSISTVTIRANDVVSGFLSIGPAVKLISEDSVEDSPQQKLQLRVRRTAGLSGVVSAKIRAYAGLKTPLVDASQFHREHKGTWALEGEDFALETQSVTLLEGQNEVEVTVIMLNDQEPEGQEAFFIYLSDAEGGAQIVSVPDELGFTSFAKIIILGSDLQNGIVGFSLSSLSGQVLDEDSVNRTVTLVLQRQENRAFEDVLVFWRVTFSTTDHALVSHGVDLSKELLQTSGTSIRRKGEVLCALKLEVQPDKNPEYEVWFLVEVYKVGEGAAINQTARFANITMLESDDPRGLVYFAQGSRLPVVTLKATSVSLQIYRDASTASSISVEYRMQELPKVESIGPSLVWPAVAGQDFVMSEGTLTFEIGQSSAGLNIDLTPNIGSSNLTPKRFQVVLSDATGGARVHPEFGLANVTLVSDTETQAVWALLDQLHQPLEETIINRVLHALINKVSRDITPEQLMAVLDASSKILSDAEQTPLKDSSRGLTYDLLCAMANPNRTDTQGVSQLSEVAERFAYSLLTDIKCGAEGKRGITILDNCPYFTIAAHHWYPMQINGHTFIGKNTDTFTLPETLLEVPALPADSTAPSACYKVHFTEYSTEHWFLTNKKPSALNGKVFSVSLYGRGSKPLSEGQEVVYRIHTPDRRGKPKPSQSLCLLWNQAAESWLSDGQFCRLVDDTQNYVECACSHLSIYTAYAEIESLASFNEAFYAAGFICISGFALAMVSHLMCARFLMFAAKLLTHMMVACLGTQICFLVSAFRGRMFSEDSCAALGLFFHYFHLSQFGWMLVQAINFWQILVMNDEHTERRYLLYFLLSWGLPALVIIVLVVVLLGGFGWSIHSVYGLVQGDLCFIPNVYAALCTAALVPLICLVGVLVIFIHAYQVTQQWKAYDDIYRGRTNSSEVPMMLYLFALVTLVCVWAGLHMAYRYIWMLILLVIFNIFLGLYVFSVYFVMHNQLFWPGKATYTVEMNGHSSPDSIYQSTGAATVGGGEISKSTQNLISAMEEISADWERASLRPSSQPSSIFKPSPQDEAYITEGGFINTSLVRDEESQEFDDLIFALKTGSGLNVSDNESIHGSHDGGSMANSQIVELRRIPIADTHL.

Positions 1–23 (MPAVLALSGLLLMLLTVSVRSES) are cleaved as a signal peptide. Calx-beta domains lie at 24 to 109 (AELR…VFIL), 126 to 230 (ATIT…VQLT), 249 to 355 (ISRN…QVVL), 380 to 480 (DKPY…LKLI), 637 to 737 (PDIA…ILTL), 753 to 853 (SREI…VVLS), 869 to 972 (NITV…ITLL), 997 to 1083 (IYFA…YIVL), 1099 to 1199 (TVVI…LRLM), 1434 to 1534 (PIPG…FYLQ), 1563 to 1655 (GLFS…RVRL), 1835 to 1937 (IIVT…VRLT), 1963 to 2063 (LFVF…FLEL), 2092 to 2190 (QVII…RIEL), 2208 to 2308 (ITIL…KVEL), 2425 to 2525 (AAFC…FIIK), 2582 to 2659 (VREE…QIGL), 2673 to 2773 (DTVT…RVIL), 2814 to 2908 (PSSL…LVNI), 2931 to 3029 (EIII…QLIL), and 3054 to 3154 (GHGI…TVTL). The Extracellular segment spans residues 24-5803 (AELRFQGQTQ…IESLASFNEA (5780 aa)). EAR repeat units lie at residues 3239 to 3284 (VLAV…KWQG), 3285 to 3333 (VFVP…RVQA), 3336 to 3372 (NLTL…VWNR), 3374 to 3420 (SFFL…QWTD), 3422 to 3467 (RFQN…LWGS), and 3471 to 3513 (VFQQ…SWRS). 13 consecutive Calx-beta domains span residues 3562–3605 (SNQS…RVSL), 3619–3719 (QVTF…TIVL), 3778–3854 (ITLS…FVNI), 3916–3985 (VLRL…MVKL), 4000–4103 (VVVS…IQLL), 4120–4220 (VVIR…QLRL), 4247–4335 (HGLF…FLNI), 4371–4471 (VIIQ…LQLT), 4493–4593 (DSPN…IIML), 4615–4715 (KFGD…TLRL), 4993–5076 (QHLV…VNLT), 5125–5225 (SEDS…IYLS), and 5260–5360 (VGFS…LVEV). The 166-residue stretch at 5636-5801 (PYFTIAAHHW…AEIESLASFN (166 aa)) folds into the GAIN-B domain. Cystine bridges form between Cys-5751–Cys-5780 and Cys-5768–Cys-5782. The tract at residues 5751–5801 (CLLWNQAAESWLSDGQFCRLVDDTQNYVECACSHLSIYTAYAEIESLASFN) is GPS. The helical transmembrane segment at 5804–5824 (FYAAGFICISGFALAMVSHLM) threads the bilayer. Residues 5825–5834 (CARFLMFAAK) are Cytoplasmic-facing. A helical transmembrane segment spans residues 5835–5855 (LLTHMMVACLGTQICFLVSAF). Over 5856-5864 (RGRMFSEDS) the chain is Extracellular. A helical transmembrane segment spans residues 5865–5885 (CAALGLFFHYFHLSQFGWMLV). Residues 5886–5908 (QAINFWQILVMNDEHTERRYLLY) are Cytoplasmic-facing. The chain crosses the membrane as a helical span at residues 5909-5929 (FLLSWGLPALVIIVLVVVLLG). Topologically, residues 5930–5954 (GFGWSIHSVYGLVQGDLCFIPNVYA) are extracellular. The helical transmembrane segment at 5955–5975 (ALCTAALVPLICLVGVLVIFI) threads the bilayer. Over 5976-6001 (HAYQVTQQWKAYDDIYRGRTNSSEVP) the chain is Cytoplasmic. A helical transmembrane segment spans residues 6002–6022 (MMLYLFALVTLVCVWAGLHMA). The Extracellular segment spans residues 6023-6025 (YRY). Residues 6026–6046 (IWMLILLVIFNIFLGLYVFSV) traverse the membrane as a helical segment. Over 6047-6199 (YFVMHNQLFW…RRIPIADTHL (153 aa)) the chain is Cytoplasmic.

Belongs to the G-protein coupled receptor 2 family. Adhesion G-protein coupled receptor (ADGR) subfamily. In terms of assembly, heterodimer of 2 chains generated by proteolytic processing; the large extracellular N-terminal fragment and the membrane-bound C-terminal fragment predominantly remain associated and non-covalently linked. Post-translationally, autoproteolytically processed at the GPS region of the GAIN-B domain; this cleavage modulates receptor activity.

The protein resides in the cell membrane. Its subcellular location is the cell projection. It is found in the stereocilium membrane. It localises to the photoreceptor inner segment. Its function is as follows. Receptor that may have an important role in the development of the sensory nervous system. The sequence is that of Adhesion G-protein coupled receptor V1 (adgrv1) from Danio rerio (Zebrafish).